The sequence spans 396 residues: Elongation factor Tu 1 (396 aa).

The 197-residue stretch at 10 to 206 (KPHCNVGTIG…AVDDYIPQPE (197 aa)) folds into the tr-type G domain. A G1 region spans residues 19 to 26 (GHVDHGKT). 19–26 (GHVDHGKT) is a GTP binding site. Residue Thr-26 participates in Mg(2+) binding. A G2 region spans residues 60-64 (GITIS). The G3 stretch occupies residues 81–84 (DCPG). GTP is bound by residues 81–85 (DCPGH) and 136–139 (NKCD). The tract at residues 136-139 (NKCD) is G4. A G5 region spans residues 174–176 (SAL).

This sequence belongs to the TRAFAC class translation factor GTPase superfamily. Classic translation factor GTPase family. EF-Tu/EF-1A subfamily. As to quaternary structure, monomer.

The protein localises to the cytoplasm. It carries out the reaction GTP + H2O = GDP + phosphate + H(+). GTP hydrolase that promotes the GTP-dependent binding of aminoacyl-tRNA to the A-site of ribosomes during protein biosynthesis. The sequence is that of Elongation factor Tu 1 from Rhodospirillum rubrum (strain ATCC 11170 / ATH 1.1.1 / DSM 467 / LMG 4362 / NCIMB 8255 / S1).